Reading from the N-terminus, the 309-residue chain is Porphobilinogen deaminase (309 aa).

Cysteine 242 bears the S-(dipyrrolylmethanemethyl)cysteine mark.

It belongs to the HMBS family. Monomer. It depends on dipyrromethane as a cofactor.

The enzyme catalyses 4 porphobilinogen + H2O = hydroxymethylbilane + 4 NH4(+). It participates in porphyrin-containing compound metabolism; protoporphyrin-IX biosynthesis; coproporphyrinogen-III from 5-aminolevulinate: step 2/4. In terms of biological role, tetrapolymerization of the monopyrrole PBG into the hydroxymethylbilane pre-uroporphyrinogen in several discrete steps. The sequence is that of Porphobilinogen deaminase from Shewanella sediminis (strain HAW-EB3).